The chain runs to 178 residues: ATP synthase subunit delta (178 aa).

The protein belongs to the ATPase delta chain family. As to quaternary structure, F-type ATPases have 2 components, F(1) - the catalytic core - and F(0) - the membrane proton channel. F(1) has five subunits: alpha(3), beta(3), gamma(1), delta(1), epsilon(1). F(0) has three main subunits: a(1), b(2) and c(10-14). The alpha and beta chains form an alternating ring which encloses part of the gamma chain. F(1) is attached to F(0) by a central stalk formed by the gamma and epsilon chains, while a peripheral stalk is formed by the delta and b chains.

It localises to the cell membrane. Its function is as follows. F(1)F(0) ATP synthase produces ATP from ADP in the presence of a proton or sodium gradient. F-type ATPases consist of two structural domains, F(1) containing the extramembraneous catalytic core and F(0) containing the membrane proton channel, linked together by a central stalk and a peripheral stalk. During catalysis, ATP synthesis in the catalytic domain of F(1) is coupled via a rotary mechanism of the central stalk subunits to proton translocation. Functionally, this protein is part of the stalk that links CF(0) to CF(1). It either transmits conformational changes from CF(0) to CF(1) or is implicated in proton conduction. The chain is ATP synthase subunit delta from Streptococcus pyogenes serotype M3 (strain ATCC BAA-595 / MGAS315).